Reading from the N-terminus, the 24-residue chain is Brevinin-1CSa (24 aa).

Cysteine 18 and cysteine 24 are oxidised to a cystine.

Expressed by the skin glands.

It localises to the secreted. It is found in the target cell membrane. In terms of biological role, antibacterial peptide. Has activity against the Gram-positive bacterium S.aureus (MIC=2 uM) and the Gram-negative bacterium E.coli (MIC=32 uM). Has a strong hemolytic activity (LC(50)=5 uM). This Rana cascadae (Cascades frog) protein is Brevinin-1CSa.